The following is a 228-amino-acid chain: Ribosomal RNA small subunit methyltransferase G (228 aa).

Residues Gly-70, 121–122 (AE), and Arg-138 each bind S-adenosyl-L-methionine.

This sequence belongs to the methyltransferase superfamily. RNA methyltransferase RsmG family.

The protein resides in the cytoplasm. In terms of biological role, specifically methylates the N7 position of a guanine in 16S rRNA. The sequence is that of Ribosomal RNA small subunit methyltransferase G from Thermotoga sp. (strain RQ2).